The primary structure comprises 129 residues: Small ribosomal subunit protein uS8 (129 aa).

It belongs to the universal ribosomal protein uS8 family. In terms of assembly, part of the 30S ribosomal subunit. Contacts proteins S5 and S12.

Its function is as follows. One of the primary rRNA binding proteins, it binds directly to 16S rRNA central domain where it helps coordinate assembly of the platform of the 30S subunit. The chain is Small ribosomal subunit protein uS8 from Legionella pneumophila (strain Corby).